Here is a 72-residue protein sequence, read N- to C-terminus: Translation initiation factor IF-1 (72 aa).

Positions 1–72 (MAKDDVIEIE…TKGRITYRFK (72 aa)) constitute an S1-like domain.

Belongs to the IF-1 family. As to quaternary structure, component of the 30S ribosomal translation pre-initiation complex which assembles on the 30S ribosome in the order IF-2 and IF-3, IF-1 and N-formylmethionyl-tRNA(fMet); mRNA recruitment can occur at any time during PIC assembly.

It localises to the cytoplasm. In terms of biological role, one of the essential components for the initiation of protein synthesis. Stabilizes the binding of IF-2 and IF-3 on the 30S subunit to which N-formylmethionyl-tRNA(fMet) subsequently binds. Helps modulate mRNA selection, yielding the 30S pre-initiation complex (PIC). Upon addition of the 50S ribosomal subunit IF-1, IF-2 and IF-3 are released leaving the mature 70S translation initiation complex. The polypeptide is Translation initiation factor IF-1 (Ligilactobacillus salivarius (strain UCC118) (Lactobacillus salivarius)).